The chain runs to 962 residues: Protease 3 (962 aa).

An N-terminal signal peptide occupies residues 1–23; sequence MPRSTWFKALLLFVALWAPLSQA. A Zn(2+)-binding site is contributed by histidine 88. Glutamate 91 functions as the Proton acceptor in the catalytic mechanism. Histidine 92 and glutamate 169 together coordinate Zn(2+).

Belongs to the peptidase M16 family. As to quaternary structure, monomer. The cofactor is Zn(2+).

It localises to the periplasm. The enzyme catalyses Preferential cleavage of 16-Tyr-|-Leu-17 and 25-Phe-|-Tyr-26 bonds of oxidized insulin B chain. Also acts on other substrates of Mw less than 7 kDa such as insulin and glucagon.. Functionally, endopeptidase that degrades small peptides of less than 7 kDa, such as glucagon and insulin. In Shigella flexneri, this protein is Protease 3 (ptrA).